A 251-amino-acid polypeptide reads, in one-letter code: Hydroxyacylglutathione hydrolase (251 aa).

Positions 53, 55, 57, 58, 110, 127, and 165 each coordinate Zn(2+).

This sequence belongs to the metallo-beta-lactamase superfamily. Glyoxalase II family. Monomer. Zn(2+) serves as cofactor.

It catalyses the reaction an S-(2-hydroxyacyl)glutathione + H2O = a 2-hydroxy carboxylate + glutathione + H(+). The protein operates within secondary metabolite metabolism; methylglyoxal degradation; (R)-lactate from methylglyoxal: step 2/2. Its function is as follows. Thiolesterase that catalyzes the hydrolysis of S-D-lactoyl-glutathione to form glutathione and D-lactic acid. This chain is Hydroxyacylglutathione hydrolase, found in Escherichia coli (strain UTI89 / UPEC).